Here is a 323-residue protein sequence, read N- to C-terminus: tRNA U34 carboxymethyltransferase (323 aa).

Residues Lys-91, Trp-105, Lys-110, Gly-130, 152-154 (DPT), 181-182 (IE), Met-196, Tyr-200, and Arg-315 contribute to the carboxy-S-adenosyl-L-methionine site.

The protein belongs to the class I-like SAM-binding methyltransferase superfamily. CmoB family. In terms of assembly, homotetramer.

The enzyme catalyses carboxy-S-adenosyl-L-methionine + 5-hydroxyuridine(34) in tRNA = 5-carboxymethoxyuridine(34) in tRNA + S-adenosyl-L-homocysteine + H(+). Functionally, catalyzes carboxymethyl transfer from carboxy-S-adenosyl-L-methionine (Cx-SAM) to 5-hydroxyuridine (ho5U) to form 5-carboxymethoxyuridine (cmo5U) at position 34 in tRNAs. This chain is tRNA U34 carboxymethyltransferase, found in Shigella flexneri serotype 5b (strain 8401).